The following is a 540-amino-acid chain: Chaperonin GroEL (540 aa).

ATP contacts are provided by residues 29–32, 86–90, Gly413, and Asp493; these read TLGP and DGTTT. A disordered region spans residues 520-540; it reads AEKPEPKPAPGPADPGAGMDF.

It belongs to the chaperonin (HSP60) family. Forms a cylinder of 14 subunits composed of two heptameric rings stacked back-to-back. Interacts with the co-chaperonin GroES.

It localises to the cytoplasm. It carries out the reaction ATP + H2O + a folded polypeptide = ADP + phosphate + an unfolded polypeptide.. Together with its co-chaperonin GroES, plays an essential role in assisting protein folding. The GroEL-GroES system forms a nano-cage that allows encapsulation of the non-native substrate proteins and provides a physical environment optimized to promote and accelerate protein folding. The polypeptide is Chaperonin GroEL (Tropheryma whipplei (Whipple's bacillus)).